Consider the following 380-residue polypeptide: Cytochrome b (380 aa).

Helical transmembrane passes span Phe34–Met54, Trp78–Ile99, Trp114–Leu134, and Phe179–Leu199. His84 and His98 together coordinate heme b. His183 and His197 together coordinate heme b. Position 202 (His202) interacts with a ubiquinone. A run of 4 helical transmembrane segments spans residues Tyr227–Thr247, Leu289–His309, Ile321–Gly341, and Phe348–Pro368.

This sequence belongs to the cytochrome b family. The cytochrome bc1 complex contains 3 respiratory subunits (MT-CYB, CYC1 and UQCRFS1), 2 core proteins (UQCRC1 and UQCRC2) and probably 6 low-molecular weight proteins. Heme b serves as cofactor.

The protein resides in the mitochondrion inner membrane. Functionally, component of the ubiquinol-cytochrome c reductase complex (complex III or cytochrome b-c1 complex) that is part of the mitochondrial respiratory chain. The b-c1 complex mediates electron transfer from ubiquinol to cytochrome c. Contributes to the generation of a proton gradient across the mitochondrial membrane that is then used for ATP synthesis. This Pastinachus sephen (Cowtail stingray) protein is Cytochrome b (mt-cyb).